A 452-amino-acid polypeptide reads, in one-letter code: Retinoid-inducible serine carboxypeptidase (452 aa).

The first 26 residues, 1-26 (MELALRRSPVPRWLLLLPLLLGLNAG), serve as a signal peptide directing secretion. Asn-64 and Asn-126 each carry an N-linked (GlcNAc...) asparagine glycan. Residue Ser-167 is part of the active site. Residue Asn-362 is glycosylated (N-linked (GlcNAc...) asparagine). Catalysis depends on residues Asp-371 and His-431.

This sequence belongs to the peptidase S10 family.

It localises to the secreted. In terms of biological role, may be involved in vascular wall and kidney homeostasis. This chain is Retinoid-inducible serine carboxypeptidase (SCPEP1), found in Homo sapiens (Human).